Here is a 40-residue protein sequence, read N- to C-terminus: Large ribosomal subunit protein bL36 (40 aa).

The protein belongs to the bacterial ribosomal protein bL36 family.

The protein is Large ribosomal subunit protein bL36 of Corynebacterium jeikeium (strain K411).